Here is a 441-residue protein sequence, read N- to C-terminus: Ribosomal protein uS12 methylthiotransferase RimO (441 aa).

The 111-residue stretch at 7-117 (PKISFVSLGC…VLEAVHRASP (111 aa)) folds into the MTTase N-terminal domain. [4Fe-4S] cluster is bound by residues cysteine 16, cysteine 52, cysteine 81, cysteine 148, cysteine 152, and cysteine 155. The 238-residue stretch at 134-371 (LTPRHYAYLK…MARQQKISAR (238 aa)) folds into the Radical SAM core domain. The region spanning 374-440 (KRKVGTRQQI…EYDLHGTVAG (67 aa)) is the TRAM domain.

The protein belongs to the methylthiotransferase family. RimO subfamily. The cofactor is [4Fe-4S] cluster.

Its subcellular location is the cytoplasm. It carries out the reaction L-aspartate(89)-[ribosomal protein uS12]-hydrogen + (sulfur carrier)-SH + AH2 + 2 S-adenosyl-L-methionine = 3-methylsulfanyl-L-aspartate(89)-[ribosomal protein uS12]-hydrogen + (sulfur carrier)-H + 5'-deoxyadenosine + L-methionine + A + S-adenosyl-L-homocysteine + 2 H(+). In terms of biological role, catalyzes the methylthiolation of an aspartic acid residue of ribosomal protein uS12. The polypeptide is Ribosomal protein uS12 methylthiotransferase RimO (Bradyrhizobium sp. (strain BTAi1 / ATCC BAA-1182)).